The sequence spans 185 residues: Elongation factor P (185 aa).

This sequence belongs to the elongation factor P family.

The protein localises to the cytoplasm. It participates in protein biosynthesis; polypeptide chain elongation. Involved in peptide bond synthesis. Stimulates efficient translation and peptide-bond synthesis on native or reconstituted 70S ribosomes in vitro. Probably functions indirectly by altering the affinity of the ribosome for aminoacyl-tRNA, thus increasing their reactivity as acceptors for peptidyl transferase. This Clostridium perfringens (strain ATCC 13124 / DSM 756 / JCM 1290 / NCIMB 6125 / NCTC 8237 / Type A) protein is Elongation factor P.